The chain runs to 341 residues: Hyaluronan and proteoglycan link protein 2 (341 aa).

The signal sequence occupies residues M1 to G27. The Ig-like V-type domain occupies P35–T143. 5 cysteine pairs are disulfide-bonded: C58-C129, C171-C241, C195-C216, C266-C337, and C291-C312. 2 Link domains span residues V149 to T243 and L246 to A339.

The protein belongs to the HAPLN family. Brain.

The protein resides in the secreted. The protein localises to the extracellular space. It is found in the extracellular matrix. Its function is as follows. Mediates a firm binding of versican V2 to hyaluronic acid. May play a pivotal role in the formation of the hyaluronan-associated matrix in the central nervous system (CNS) which facilitates neuronal conduction and general structural stabilization. Binds to hyaluronic acid. The chain is Hyaluronan and proteoglycan link protein 2 (Hapln2) from Rattus norvegicus (Rat).